Consider the following 314-residue polypeptide: Elongation factor Ts (314 aa).

Residues 82 to 85 (TDFV) form an involved in Mg(2+) ion dislocation from EF-Tu region.

The protein belongs to the EF-Ts family.

It localises to the cytoplasm. In terms of biological role, associates with the EF-Tu.GDP complex and induces the exchange of GDP to GTP. It remains bound to the aminoacyl-tRNA.EF-Tu.GTP complex up to the GTP hydrolysis stage on the ribosome. This chain is Elongation factor Ts, found in Nostoc punctiforme (strain ATCC 29133 / PCC 73102).